Consider the following 437-residue polypeptide: GTPase Der (437 aa).

EngA-type G domains follow at residues 4-167 (PVVA…AEKD) and 175-352 (IRFS…DHQH). GTP-binding positions include 10 to 17 (GRPNVGKS), 57 to 61 (DTGGI), 119 to 122 (NKVD), 181 to 188 (GRPNVGKS), 229 to 233 (DTAGI), and 294 to 297 (NKWD). Positions 353 to 437 (RRIQSAVLND…PIRLIKRRRK (85 aa)) constitute a KH-like domain.

Belongs to the TRAFAC class TrmE-Era-EngA-EngB-Septin-like GTPase superfamily. EngA (Der) GTPase family. Associates with the 50S ribosomal subunit.

In terms of biological role, GTPase that plays an essential role in the late steps of ribosome biogenesis. The polypeptide is GTPase Der (Limosilactobacillus fermentum (strain NBRC 3956 / LMG 18251) (Lactobacillus fermentum)).